The sequence spans 418 residues: MLPNTGRLAGCTVFITGASRGIGKAIALKAAKDGANIVIAAKTAQPHPKLLGTIYTAAEEIEAVGGKALPCIVDVRDEQQISAAVEKAIKKFGGIDILVNNASAISLTNTLDTPTKRLDLMMNVNTRGTYLASKACIPYLKKSKVAHILNISPPLNLNPVWFKQHCAYTIAKYGMSMYVLGMAEEFKGEIAVNALWPKTAIHTAAMDMLGGPGIESQCRKVDIIADAAYSIFQKPKSFTGNFVIDENILKEEGIENFDVYAIKPGHPLQPDFFLDEYPEAVSKKVESTGAVPEFKEEKLQLQPKPRSGAVEETFRIVKDSLSDDVVKATQAIYLFELSGEDGGTWFLDLKSKGGNVGYGEPSDQADVVMSMTTDDFVKMFSGKLKPTMAFMSGKLKIKGNMALAIKLEKLMNQMNARL.

Residues 17-23 (GASRGIG), Lys42, and Asp74 contribute to the NADP(+) site. Lys42 bears the N6-(2-hydroxyisobutyryl)lysine mark. Lys116 carries the post-translational modification N6-acetyllysine. The active-site Proton acceptor is Tyr168. Lys172 is a binding site for NADP(+). Residues 306–415 (RSGAVEETFR…KLEKLMNQMN (110 aa)) form the SCP2 domain. Lys318 bears the N6-succinyllysine mark.

This sequence belongs to the short-chain dehydrogenases/reductases (SDR) family. Ubiquitous.

The protein resides in the peroxisome. Its subcellular location is the mitochondrion. Its function is as follows. Has apparently no steroid dehydrogenase activity. Controls bile acid (BA) and lipid metabolism in response to nutritional cues. The chain is Hydroxysteroid dehydrogenase-like protein 2 from Homo sapiens (Human).